The sequence spans 66 residues: Large ribosomal subunit protein bL31 (66 aa).

Residues C16, C18, C36, and C39 each contribute to the Zn(2+) site.

Belongs to the bacterial ribosomal protein bL31 family. Type A subfamily. As to quaternary structure, part of the 50S ribosomal subunit. It depends on Zn(2+) as a cofactor.

Binds the 23S rRNA. This chain is Large ribosomal subunit protein bL31, found in Anoxybacillus flavithermus (strain DSM 21510 / WK1).